Here is a 177-residue protein sequence, read N- to C-terminus: Large ribosomal subunit protein uL6 (177 aa).

It belongs to the universal ribosomal protein uL6 family. In terms of assembly, part of the 50S ribosomal subunit.

Functionally, this protein binds to the 23S rRNA, and is important in its secondary structure. It is located near the subunit interface in the base of the L7/L12 stalk, and near the tRNA binding site of the peptidyltransferase center. The polypeptide is Large ribosomal subunit protein uL6 (Afipia carboxidovorans (strain ATCC 49405 / DSM 1227 / KCTC 32145 / OM5) (Oligotropha carboxidovorans)).